Here is a 100-residue protein sequence, read N- to C-terminus: Integration host factor subunit alpha (100 aa).

It belongs to the bacterial histone-like protein family. Heterodimer of an alpha and a beta chain.

Its function is as follows. This protein is one of the two subunits of integration host factor, a specific DNA-binding protein that functions in genetic recombination as well as in transcriptional and translational control. The protein is Integration host factor subunit alpha of Phenylobacterium zucineum (strain HLK1).